A 901-amino-acid chain; its full sequence is Protein translocase subunit SecA (901 aa).

ATP-binding positions include Gln-89, Gly-107–Thr-111, and Asp-502. The interval Tyr-838 to Asp-883 is disordered. Zn(2+) contacts are provided by Cys-885, Cys-887, Cys-896, and His-897.

This sequence belongs to the SecA family. As to quaternary structure, monomer and homodimer. Part of the essential Sec protein translocation apparatus which comprises SecA, SecYEG and auxiliary proteins SecDF-YajC and YidC. The cofactor is Zn(2+).

The protein localises to the cell inner membrane. It localises to the cytoplasm. The enzyme catalyses ATP + H2O + cellular proteinSide 1 = ADP + phosphate + cellular proteinSide 2.. Its function is as follows. Part of the Sec protein translocase complex. Interacts with the SecYEG preprotein conducting channel. Has a central role in coupling the hydrolysis of ATP to the transfer of proteins into and across the cell membrane, serving both as a receptor for the preprotein-SecB complex and as an ATP-driven molecular motor driving the stepwise translocation of polypeptide chains across the membrane. The sequence is that of Protein translocase subunit SecA from Paracoccus denitrificans (strain Pd 1222).